We begin with the raw amino-acid sequence, 159 residues long: Acetolactate synthase small subunit (159 aa).

Positions 5-79 constitute an ACT domain; that stretch reads ILSILLENES…DVLKVTEIED (75 aa).

The protein belongs to the acetolactate synthase small subunit family. In terms of assembly, dimer of large and small chains.

The enzyme catalyses 2 pyruvate + H(+) = (2S)-2-acetolactate + CO2. It functions in the pathway amino-acid biosynthesis; L-isoleucine biosynthesis; L-isoleucine from 2-oxobutanoate: step 1/4. The protein operates within amino-acid biosynthesis; L-valine biosynthesis; L-valine from pyruvate: step 1/4. The protein is Acetolactate synthase small subunit (ilvH) of Buchnera aphidicola subsp. Baizongia pistaciae (strain Bp).